A 215-amino-acid chain; its full sequence is Glycerol-3-phosphate acyltransferase (215 aa).

Transmembrane regions (helical) follow at residues 3 to 23, 42 to 61, 68 to 90, 110 to 130, 134 to 154, and 162 to 182; these read LILL…LWIG, TNTF…LIDI, TLLP…FAVL, AGVL…VFVL, LFSM…ISVL, and LLPG…AIII.

Belongs to the PlsY family. As to quaternary structure, probably interacts with PlsX.

Its subcellular location is the cell membrane. The catalysed reaction is an acyl phosphate + sn-glycerol 3-phosphate = a 1-acyl-sn-glycero-3-phosphate + phosphate. It participates in lipid metabolism; phospholipid metabolism. In terms of biological role, catalyzes the transfer of an acyl group from acyl-phosphate (acyl-PO(4)) to glycerol-3-phosphate (G3P) to form lysophosphatidic acid (LPA). This enzyme utilizes acyl-phosphate as fatty acyl donor, but not acyl-CoA or acyl-ACP. This chain is Glycerol-3-phosphate acyltransferase, found in Streptococcus equi subsp. zooepidemicus (strain MGCS10565).